We begin with the raw amino-acid sequence, 219 residues long: Probable GTP-binding protein EngB (219 aa).

The region spanning 31 to 205 (VGVEIAFAGR…LSILNEWCHP (175 aa)) is the EngB-type G domain. GTP is bound by residues 39-46 (GRSNAGKS), 66-70 (GRTQL), 84-87 (DLPG), 151-154 (TKSD), and 184-186 (FSA). The Mg(2+) site is built by S46 and T68.

Belongs to the TRAFAC class TrmE-Era-EngA-EngB-Septin-like GTPase superfamily. EngB GTPase family. Requires Mg(2+) as cofactor.

Necessary for normal cell division and for the maintenance of normal septation. This chain is Probable GTP-binding protein EngB, found in Shewanella sp. (strain MR-7).